Reading from the N-terminus, the 209-residue chain is PRA1 family protein A3 (209 aa).

The next 4 helical transmembrane spans lie at 51-72 (LYYY…ALIT), 76-98 (AILG…AATF), 143-163 (LVFV…SCGL), and 164-184 (LWVL…ASLR).

This sequence belongs to the PRA1 family.

The protein localises to the endosome membrane. Functionally, may be involved in both secretory and endocytic intracellular trafficking in the endosomal/prevacuolar compartments. This is PRA1 family protein A3 (PRA1A3) from Arabidopsis thaliana (Mouse-ear cress).